A 220-amino-acid polypeptide reads, in one-letter code: HTH-type transcriptional repressor KstR (220 aa).

The HTH tetR-type domain occupies 36-96 (RERRKRILDA…SALGREFSRI (61 aa)). Residues 59 to 78 (QMRAVADRADVAVGTLYRYF) constitute a DNA-binding region (H-T-H motif).

In terms of assembly, homodimer.

Functionally, controls the expression of genes used for utilizing diverse lipids as energy sources. The chain is HTH-type transcriptional repressor KstR (kstR) from Mycobacterium tuberculosis (strain ATCC 25618 / H37Rv).